The primary structure comprises 463 residues: Cysteine--tRNA ligase (463 aa).

Cys-27 lines the Zn(2+) pocket. A 'HIGH' region motif is present at residues 29-39 (PTVYGLIHIGN). Positions 207, 232, and 236 each coordinate Zn(2+). The 'KMSKS' region motif lies at 264-268 (KMSKS). Lys-267 is a binding site for ATP.

Belongs to the class-I aminoacyl-tRNA synthetase family. Monomer. The cofactor is Zn(2+).

The protein resides in the cytoplasm. It carries out the reaction tRNA(Cys) + L-cysteine + ATP = L-cysteinyl-tRNA(Cys) + AMP + diphosphate. The sequence is that of Cysteine--tRNA ligase from Pseudothermotoga lettingae (strain ATCC BAA-301 / DSM 14385 / NBRC 107922 / TMO) (Thermotoga lettingae).